The sequence spans 218 residues: Ribose-5-phosphate isomerase A (218 aa).

Substrate contacts are provided by residues 27 to 30 (TGST), 80 to 83 (DGAD), and 93 to 96 (KGGG). The active-site Proton acceptor is the E102. K120 is a substrate binding site.

It belongs to the ribose 5-phosphate isomerase family. As to quaternary structure, homodimer.

It catalyses the reaction aldehydo-D-ribose 5-phosphate = D-ribulose 5-phosphate. Its pathway is carbohydrate degradation; pentose phosphate pathway; D-ribose 5-phosphate from D-ribulose 5-phosphate (non-oxidative stage): step 1/1. Catalyzes the reversible conversion of ribose-5-phosphate to ribulose 5-phosphate. This Picrophilus torridus (strain ATCC 700027 / DSM 9790 / JCM 10055 / NBRC 100828 / KAW 2/3) protein is Ribose-5-phosphate isomerase A.